The following is a 364-amino-acid chain: Aminomethyltransferase (364 aa).

The protein belongs to the GcvT family. In terms of assembly, the glycine cleavage system is composed of four proteins: P, T, L and H.

The catalysed reaction is N(6)-[(R)-S(8)-aminomethyldihydrolipoyl]-L-lysyl-[protein] + (6S)-5,6,7,8-tetrahydrofolate = N(6)-[(R)-dihydrolipoyl]-L-lysyl-[protein] + (6R)-5,10-methylene-5,6,7,8-tetrahydrofolate + NH4(+). In terms of biological role, the glycine cleavage system catalyzes the degradation of glycine. This Thermotoga maritima (strain ATCC 43589 / DSM 3109 / JCM 10099 / NBRC 100826 / MSB8) protein is Aminomethyltransferase.